The primary structure comprises 67 residues: Alpha-conotoxin-like Qc1.1b (67 aa).

Positions 1–21 (MGMRMMFTMFLLVVLAITVVS) are cleaved as a signal peptide. A propeptide spanning residues 22-46 (FTSDHASDGRNTAANDKASKLMALR) is cleaved from the precursor. Cystine bridges form between cysteine 49-cysteine 55 and cysteine 50-cysteine 63. Residues 51–53 (DNP) are lacks the Ser-Xaa-Pro motif that is crucial for potent interaction with nAChR.

The protein belongs to the conotoxin A superfamily. In terms of tissue distribution, expressed by the venom duct.

The protein resides in the secreted. Its function is as follows. Alpha-conotoxins act on postsynaptic membranes, they bind to the nicotinic acetylcholine receptors (nAChR) and thus inhibit them. Has possibly a distinct nAChR binding mode from other alpha-conotoxins, due to a different three residue motif (lacks the Ser-Xaa-Pro motif). This chain is Alpha-conotoxin-like Qc1.1b, found in Conus quercinus (Oak cone).